A 245-amino-acid polypeptide reads, in one-letter code: MPEGVAFPKEIKSFVRRAGRTTTGQAKALEDMGPQFLLPYQTSAIDFIATYADSTGARGNNDINPGPVILEIGFGMGEATAHIAALMPEKNFLCCEVHEPGVGALLKRIGEQGLRNIRIVAHDAVEVIDHMLPLQSLDGVHIFFPDPWHKKKHNKRRLIQSALIAKLAARLKVGGYIHCATDWQPYAEQILEVLSKEPLLKNTATQTHPELAGYAPKPYYRPLTKFENRGIKLGHGVWDIVFERV.

Residues glutamate 71, glutamate 96, aspartate 123, and aspartate 146 each coordinate S-adenosyl-L-methionine. The active site involves aspartate 146. Lysine 150 contributes to the substrate binding site. An interaction with RNA region spans residues 152-157 (KHNKRR). Residues aspartate 182 and 224-227 (TKFE) contribute to the substrate site.

It belongs to the class I-like SAM-binding methyltransferase superfamily. TrmB family.

The enzyme catalyses guanosine(46) in tRNA + S-adenosyl-L-methionine = N(7)-methylguanosine(46) in tRNA + S-adenosyl-L-homocysteine. It participates in tRNA modification; N(7)-methylguanine-tRNA biosynthesis. In terms of biological role, catalyzes the formation of N(7)-methylguanine at position 46 (m7G46) in tRNA. The sequence is that of tRNA (guanine-N(7)-)-methyltransferase from Albidiferax ferrireducens (strain ATCC BAA-621 / DSM 15236 / T118) (Rhodoferax ferrireducens).